A 288-amino-acid chain; its full sequence is Diaminopimelate epimerase (288 aa).

Positions 13, 51, and 71 each coordinate substrate. C80 serves as the catalytic Proton donor. Residues 81-82 (GN), N166, N200, and 218-219 (ER) contribute to the substrate site. The active-site Proton acceptor is C227. 228–229 (GT) contacts substrate.

This sequence belongs to the diaminopimelate epimerase family. As to quaternary structure, homodimer.

The protein resides in the cytoplasm. It catalyses the reaction (2S,6S)-2,6-diaminopimelate = meso-2,6-diaminopimelate. Its pathway is amino-acid biosynthesis; L-lysine biosynthesis via DAP pathway; DL-2,6-diaminopimelate from LL-2,6-diaminopimelate: step 1/1. In terms of biological role, catalyzes the stereoinversion of LL-2,6-diaminopimelate (L,L-DAP) to meso-diaminopimelate (meso-DAP), a precursor of L-lysine and an essential component of the bacterial peptidoglycan. The polypeptide is Diaminopimelate epimerase (Caulobacter vibrioides (strain ATCC 19089 / CIP 103742 / CB 15) (Caulobacter crescentus)).